We begin with the raw amino-acid sequence, 106 residues long: Late cornified envelope protein 2A (106 aa).

The span at 1 to 10 (MSCQQNQQQC) shows a compositional bias: low complexity. A disordered region spans residues 1 to 25 (MSCQQNQQQCQPPPKCPPKCPPKCP). The segment covering 11–25 (QPPPKCPPKCPPKCP) has biased composition (pro residues).

This sequence belongs to the LCE family. Interacts with CYSRT1. Skin-specific. Expression was readily detected in adult trunk skin, adult arm skin, fetal skin, penal skin, vulva, esophagus and tongue. Not expressed in the cervix, rectum, lung, colon, or placenta.

Its function is as follows. Precursors of the cornified envelope of the stratum corneum. The sequence is that of Late cornified envelope protein 2A (LCE2A) from Homo sapiens (Human).